The primary structure comprises 677 residues: MLSSGDLTSASWELVVRVDHANGEQQTEITLRVSGDLHIGGVMLKLVEQMNIAQDWSDYALWWEQKRCWLLKTHWTLDKCGVQADANLLFTPQHKMLRLRLPNAKTVRLRVSFSAVVFKAVADICKVLNIRRPEELSLLKPSSDYCKKKKKKEKNSKEPVIEDILNLESSSTSSGSPVSPGLYSKTMTPTYDPINGTPALSTMTWFGDSPLTEQNCSVLAFSQPPPSPDVLADMFQPRSLVDKAKMNAGWLDSSRSLMEQSIQEDEQLQLRFKYYTFFDLNPKYDAVRINQLYEQARWAVLLEEIDCTEEEMLIFAALQYHISKLSQCAEIQDFATKSEVDEVEAALSSLEVTLEGGKADNTLEDITDIPKLADYLKLFRPKKLMLKACKQYWFVFKDTSIAYFKNKELEQGEPIEKLNLRGCEIVPDVNVSGRKFGIKLLIPVADGMNEVYLRCDHEDQYARWMAACILASKGKTMADSSYQPEVISILSFLKMKNRNSSPLVASSLENMDMNPECLVSPCCAKKHKSKQLAARILEAHHNVAQMPLVEAKLQFIQAWQSLPEFGLTYYLVRFKGSKKDDILGVAYNRLIRIDAVTGIPVTTWRFANMKQWNVNWEIRQVAIEFDQNVSIAFTCLSADCKIVHEYIGGYIFLSTRSKDQNETLDEDLFHKLTGGQD.

The FERM domain maps to 96–653 (MLRLRLPNAK…HEYIGGYIFL (558 aa)). The interval 157–181 (KEPVIEDILNLESSSTSSGSPVSPG) is disordered. Over residues 169–181 (SSSTSSGSPVSPG) the composition is skewed to low complexity. Residues Ser-170 and Ser-179 each carry the phosphoserine modification. Residues 377 to 473 (KLFRPKKLML…WMAACILASK (97 aa)) form the PH domain.

The protein belongs to the kindlin family. As to quaternary structure, interacts with the cytoplasmic domain of integrins ITGB1 and ITGB3.

The protein resides in the cytoplasm. It localises to the cytoskeleton. The protein localises to the cell junction. It is found in the focal adhesion. Its subcellular location is the cell projection. The protein resides in the ruffle membrane. Functionally, involved in cell adhesion. Contributes to integrin activation. When coexpressed with talin, potentiates activation of ITGA2B. Required for normal keratinocyte proliferation. Required for normal polarization of basal keratinocytes in skin, and for normal cell shape. Required for normal adhesion of keratinocytes to fibronectin and laminin, and for normal keratinocyte migration to wound sites. In Mus musculus (Mouse), this protein is Fermitin family homolog 1 (Fermt1).